The chain runs to 157 residues: Transcription inhibitor protein Gfh1 (157 aa).

The stretch at Met1–Ile74 forms a coiled coil.

The protein belongs to the GreA/GreB family. In terms of assembly, interacts with RNAP.

In terms of biological role, inhibits all catalytic activities of RNA polymerase (RNAP) by partially occluding its substrate-binding site and preventing NTP binding. The polypeptide is Transcription inhibitor protein Gfh1 (gfh1) (Thermus aquaticus).